The following is a 475-amino-acid chain: BTB/POZ domain-containing protein 10 (475 aa).

The interval 1-143 (MAGRPHPYDG…SSQSSSDGSC (143 aa)) is disordered. Basic residues predominate over residues 22 to 31 (LHSRPRKLYK). A compositionally biased stretch (basic and acidic residues) spans 57 to 80 (GHERSRDRRRSSDRSRDSSHERTE). The span at 81 to 94 (SQLTPCIRNVTSPT) shows a compositional bias: polar residues. Positions 97–107 (HHVEREKDHSS) are enriched in basic and acidic residues. Low complexity predominate over residues 108–142 (SRPSSPRPQKASPNGSISSAGNSSRNSSQSSSDGS). The segment at 146-475 (AGEMVFVYEN…LDPDAQNPTL (330 aa)) is interaction with AKT family members. The 75-residue stretch at 167-241 (ERVTLIVDNT…YKTGIIRCPD (75 aa)) folds into the BTB domain. Residues 456 to 475 (PIHPPSGNSDLDPDAQNPTL) are disordered.

In terms of assembly, interacts (via C-terminal 330-amino-acid region) with AKT1; AKT2 and AKT3. Interacts with PPP2CA and PPP1CA.

Its subcellular location is the nucleus. It localises to the cytoplasm. Its function is as follows. Plays a major role as an activator of AKT family members by inhibiting PPP2CA-mediated dephosphorylation, thereby keeping AKTs activated. Plays a role in preventing motor neuronal death and in accelerating the growth of pancreatic beta cells. This is BTB/POZ domain-containing protein 10 (BTBD10) from Pongo abelii (Sumatran orangutan).